The chain runs to 423 residues: Lipase member M (423 aa).

Positions 1–33 (MLETLSRQWIVSHRMEMWLLILVAYMFQRNVNS) are cleaved as a signal peptide. N-linked (GlcNAc...) asparagine glycosylation occurs at Asn48. Residues 92 to 392 (PVVLLQHGLV…EWAHVDFIWG (301 aa)) enclose the AB hydrolase-1 domain. The active-site Nucleophile is the Ser186. Cys260 and Cys269 are oxidised to a cystine. Residues Asp357 and His386 each act as charge relay system in the active site.

Belongs to the AB hydrolase superfamily. Lipase family. Exclusively expressed in the epidermis within the granular keratinocytes.

It localises to the secreted. Plays a highly specific role in the last step of keratinocyte differentiation. May have an essential function in lipid metabolism of the most differentiated epidermal layers. This Homo sapiens (Human) protein is Lipase member M (LIPM).